A 577-amino-acid chain; its full sequence is Moesin (577 aa).

Positions 2 to 295 (PKTINVRVTT…GNHELYMRRR (294 aa)) constitute an FERM domain. At S74 the chain carries Phosphoserine. K79 is subject to N6-acetyllysine. At K83 the chain carries N6-succinyllysine. The [IL]-x-C-x-x-[DE] motif motif lies at 115 to 120 (IYCPPE). Y116 carries the phosphotyrosine modification. C117 bears the S-nitrosocysteine mark. 2 positions are modified to N6-acetyllysine: K139 and K165. Residues 375–401 (LEQERKRAQSEAEKLAKERQEAEEAKE) are compositionally biased toward basic and acidic residues. Disordered stretches follow at residues 375 to 409 (LEQE…ASQD) and 466 to 518 (AMST…NERV). Phosphoserine is present on S407. The span at 476–487 (AENEQDEQDENG) shows a compositional bias: acidic residues. Residues 492–518 (AELRADAMAKDRSEEERTTEAEKNERV) are compositionally biased toward basic and acidic residues. S527 is modified (phosphoserine). Phosphothreonine; by ROCK2 and STK10 is present on T558.

In terms of assembly, in resting T-cells, part of a PAG1-NHERF1-MSN complex which is disrupted upon TCR activation. Interacts with NHERF1. Interacts with PPP1R16B. Interacts with PDZD8. Interacts with SELPLG and SYK; these interactions mediate the activation of SYK by SELPLG. Interacts with PDPN (via cytoplasmic domain); this interaction activates RHOA and promotes epithelial-mesenchymal transition. Interacts with SPN/CD43 cytoplasmic tail. Interacts with CD44. Interacts with ICAM2. Interacts with ICAM3 (via C-terminus). Interacts with PDZD8. Interacts with F-actin. Interacts with CD46. Interacts with PTPN6. In terms of processing, phosphorylation on Thr-558 is crucial for the formation of microvilli-like structures. Phosphorylation by ROCK2 suppresses the head-to-tail association of the N-terminal and C-terminal halves resulting in an opened conformation which is capable of actin and membrane-binding. Phosphorylation on Thr-558 by STK10 negatively regulates lymphocyte migration and polarization. Post-translationally, S-nitrosylation of Cys-117 is induced by interferon-gamma and oxidatively-modified low-densitity lipoprotein (LDL(ox)) implicating the iNOS-S100A8/9 transnitrosylase complex.

The protein localises to the cell membrane. Its subcellular location is the cytoplasm. The protein resides in the cytoskeleton. It localises to the apical cell membrane. It is found in the cell projection. The protein localises to the microvillus membrane. Its subcellular location is the microvillus. With respect to regulation, a head-to-tail association, of the N-terminal and C-terminal halves results in a closed conformation (inactive form) which is incapable of actin or membrane-binding. In terms of biological role, ezrin-radixin-moesin (ERM) family protein that connects the actin cytoskeleton to the plasma membrane and thereby regulates the structure and function of specific domains of the cell cortex. Tethers actin filaments by oscillating between a resting and an activated state providing transient interactions between moesin and the actin cytoskeleton. Once phosphorylated on its C-terminal threonine, moesin is activated leading to interaction with F-actin and cytoskeletal rearrangement. These rearrangements regulate many cellular processes, including cell shape determination, membrane transport, and signal transduction. The role of moesin is particularly important in immunity acting on both T and B-cells homeostasis and self-tolerance, regulating lymphocyte egress from lymphoid organs. Modulates phagolysosomal biogenesis in macrophages. Participates also in immunologic synapse formation. The sequence is that of Moesin from Bos taurus (Bovine).